Consider the following 174-residue polypeptide: Crossover junction endodeoxyribonuclease RuvC (174 aa).

Residues aspartate 8, glutamate 68, and aspartate 140 contribute to the active site. Mg(2+)-binding residues include aspartate 8, glutamate 68, and aspartate 140.

Belongs to the RuvC family. In terms of assembly, homodimer which binds Holliday junction (HJ) DNA. The HJ becomes 2-fold symmetrical on binding to RuvC with unstacked arms; it has a different conformation from HJ DNA in complex with RuvA. In the full resolvosome a probable DNA-RuvA(4)-RuvB(12)-RuvC(2) complex forms which resolves the HJ. Mg(2+) is required as a cofactor.

The protein resides in the cytoplasm. It carries out the reaction Endonucleolytic cleavage at a junction such as a reciprocal single-stranded crossover between two homologous DNA duplexes (Holliday junction).. The RuvA-RuvB-RuvC complex processes Holliday junction (HJ) DNA during genetic recombination and DNA repair. Endonuclease that resolves HJ intermediates. Cleaves cruciform DNA by making single-stranded nicks across the HJ at symmetrical positions within the homologous arms, yielding a 5'-phosphate and a 3'-hydroxyl group; requires a central core of homology in the junction. The consensus cleavage sequence is 5'-(A/T)TT(C/G)-3'. Cleavage occurs on the 3'-side of the TT dinucleotide at the point of strand exchange. HJ branch migration catalyzed by RuvA-RuvB allows RuvC to scan DNA until it finds its consensus sequence, where it cleaves and resolves the cruciform DNA. This Legionella pneumophila (strain Corby) protein is Crossover junction endodeoxyribonuclease RuvC.